Reading from the N-terminus, the 159-residue chain is Ribosomal RNA large subunit methyltransferase H (159 aa).

Residues Leu-76, Gly-108, and 127–132 each bind S-adenosyl-L-methionine; that span reads FGRLTY.

It belongs to the RNA methyltransferase RlmH family. Homodimer.

The protein resides in the cytoplasm. It carries out the reaction pseudouridine(1915) in 23S rRNA + S-adenosyl-L-methionine = N(3)-methylpseudouridine(1915) in 23S rRNA + S-adenosyl-L-homocysteine + H(+). Functionally, specifically methylates the pseudouridine at position 1915 (m3Psi1915) in 23S rRNA. The chain is Ribosomal RNA large subunit methyltransferase H from Enterococcus faecalis (strain ATCC 700802 / V583).